The chain runs to 142 residues: Hemoglobin subunit theta-1 (142 aa).

One can recognise a Globin domain in the interval 2-142; sequence ALSAEDRALV…VISALVSEYR (141 aa). Heme b-binding residues include histidine 59 and histidine 88.

The protein belongs to the globin family.

The protein is Hemoglobin subunit theta-1 (HBQ1) of Homo sapiens (Human).